A 25-amino-acid polypeptide reads, in one-letter code: Caerin-1.3 (25 aa).

A Leucine amide modification is found at Leu25.

Expressed by the skin parotoid and/or rostral glands.

It localises to the secreted. In terms of biological role, antibacterial peptide, that adopts an alpha helical conformation which can disrupt bacterial membranes. Each caerin displays a different antimicrobial specificity. The polypeptide is Caerin-1.3 (Ranoidea caerulea (Green tree frog)).